The chain runs to 1289 residues: Pesticidal crystal protein Cry5Ab (1289 aa).

The segment at 1263-1289 is disordered; that stretch reads PLPTDDQNSEGNTASSTNSDTSMNNNQ. A compositionally biased stretch (low complexity) spans 1274–1289; that stretch reads NTASSTNSDTSMNNNQ.

Belongs to the delta endotoxin family.

Functionally, endotoxin with nematicidal activity. This Bacillus thuringiensis subsp. darmstadiensis protein is Pesticidal crystal protein Cry5Ab (cry5Ab).